The sequence spans 895 residues: Histone-lysine N-methyltransferase EZ3 (895 aa).

Low complexity predominate over residues 1–13 (MASSSKASDSSSQ). Disordered regions lie at residues 1-30 (MASS…APAS) and 396-446 (SSVS…PGKR). Residues 396 to 422 (SSVSAEESTTPPSADTSETENASSDMP) show a composition bias toward polar residues. Positions 427 to 436 (RKYKISKRGP) are enriched in basic residues. The SANT domain maps to 528–578 (TLSCWSALERDLYLKGIEIFGKNSCLIARNLLSGMKTCMEVANYMYNNGAA). The region spanning 628 to 732 (AGHPTVRKRI…SLGEPPARGD (105 aa)) is the CXC domain. Residues 747–862 (QRILLGRSDV…ASEELFYDYR (116 aa)) form the SET domain. The tract at residues 870–895 (AWARRPEGSKKDEASVSHHRAHKVAR) is disordered. Residues 873–885 (RRPEGSKKDEASV) show a composition bias toward basic and acidic residues. The span at 886–895 (SHHRAHKVAR) shows a compositional bias: basic residues.

The protein belongs to the class V-like SAM-binding methyltransferase superfamily. Histone-lysine methyltransferase family. EZ subfamily. As to expression, widely expressed.

Its subcellular location is the nucleus. The enzyme catalyses L-lysyl(27)-[histone H3] + 3 S-adenosyl-L-methionine = N(6),N(6),N(6)-trimethyl-L-lysyl(27)-[histone H3] + 3 S-adenosyl-L-homocysteine + 3 H(+). Functionally, polycomb group (PcG) protein. Catalytic subunit of some PcG multiprotein complex, which methylates 'Lys-27' of histone H3, leading to transcriptional repression of the affected target genes. PcG proteins are not required to initiate repression, but to maintain it during later stages of development. The protein is Histone-lysine N-methyltransferase EZ3 (EZ3) of Zea mays (Maize).